We begin with the raw amino-acid sequence, 293 residues long: NAD-dependent protein deacetylase (293 aa).

One can recognise a Deacetylase sirtuin-type domain in the interval 5 to 282 (PAHDHHTLQD…LHAPPHLPRA (278 aa)). Residues 27 to 47 (GAGC…GGWK) and 105 to 108 (QNVD) contribute to the NAD(+) site. Residue H123 is the Proton acceptor of the active site. Residues C131, C134, C182, and C185 each coordinate Zn(2+). NAD(+) contacts are provided by residues 222-224 (GSS), 248-250 (NFG), and C266.

It belongs to the sirtuin family. Class II subfamily. It depends on Zn(2+) as a cofactor.

It localises to the cytoplasm. It catalyses the reaction N(6)-acetyl-L-lysyl-[protein] + NAD(+) + H2O = 2''-O-acetyl-ADP-D-ribose + nicotinamide + L-lysyl-[protein]. In terms of biological role, NAD-dependent protein deacetylase which modulates the activities of several enzymes which are inactive in their acetylated form. This is NAD-dependent protein deacetylase from Xanthomonas axonopodis pv. citri (strain 306).